The following is a 737-amino-acid chain: Zinc finger protein 280C (737 aa).

Glycyl lysine isopeptide (Lys-Gly) (interchain with G-Cter in SUMO2) cross-links involve residues Lys-5, Lys-10, Lys-14, Lys-33, and Lys-55. The span at 57 to 66 shows a compositional bias: polar residues; it reads AISNILNRGH. A disordered region spans residues 57–137; it reads AISNILNRGH…DFTKNSQVGS (81 aa). Residue Lys-75 forms a Glycyl lysine isopeptide (Lys-Gly) (interchain with G-Cter in SUMO2) linkage. A Phosphoserine modification is found at Ser-80. The segment covering 112-123 has biased composition (polar residues); sequence SKSSQSSVTVEN. Residues Lys-113, Lys-126, Lys-167, Lys-174, Lys-180, and Lys-187 each participate in a glycyl lysine isopeptide (Lys-Gly) (interchain with G-Cter in SUMO2) cross-link. The segment covering 176 to 185 has biased composition (polar residues); sequence PSTSKVNSVT. The segment at 176-223 is disordered; the sequence is PSTSKVNSVTPKKPKTSEDVPQINPSTSLPLIGSPPVTSSQVMLSKGT. A compositionally biased stretch (polar residues) spans 211–223; sequence PVTSSQVMLSKGT. Phosphothreonine is present on Thr-223. Ser-227 carries the post-translational modification Phosphoserine. Residue Lys-273 forms a Glycyl lysine isopeptide (Lys-Gly) (interchain with G-Cter in SUMO2) linkage. 5 consecutive C2H2-type zinc fingers follow at residues 316–338, 353–376, 383–406, 413–436, and 470–492; these read FKCFSCSKVLKNNIRFMNHMKHH, TTCQHCYRQYPTPFQLQCHIESTH, TICKICELSFETEHILLQHMKDTH, YVCQVCQFRSSTFSDVEAHFRAAH, and HRCPKCRLQFLTSKEKAEHKAQH. Residue Lys-522 forms a Glycyl lysine isopeptide (Lys-Gly) (interchain with G-Cter in SUMO2) linkage. Residues 535–579 are compositionally biased toward polar residues; that stretch reads SFLQVTPPTSQNTTARNPRKSNASRSKTSKLHATTSTASKVNTSK. A disordered region spans residues 535-602; it reads SFLQVTPPTS…YKQKRQRNRK (68 aa). Thr-540 bears the Phosphothreonine mark. Residues Lys-564 and Lys-574 each participate in a glycyl lysine isopeptide (Lys-Gly) (interchain with G-Cter in SUMO2) cross-link. A compositionally biased stretch (basic residues) spans 580–602; sequence PRGRIAKSKAKPSYKQKRQRNRK.

It localises to the nucleus. Functionally, may function as a transcription factor. The chain is Zinc finger protein 280C (ZNF280C) from Homo sapiens (Human).